A 292-amino-acid polypeptide reads, in one-letter code: 33 kDa chaperonin (292 aa).

2 disulfides stabilise this stretch: Cys-229–Cys-231 and Cys-262–Cys-265.

The protein belongs to the HSP33 family. In terms of processing, under oxidizing conditions two disulfide bonds are formed involving the reactive cysteines. Under reducing conditions zinc is bound to the reactive cysteines and the protein is inactive.

The protein localises to the cytoplasm. Redox regulated molecular chaperone. Protects both thermally unfolding and oxidatively damaged proteins from irreversible aggregation. Plays an important role in the bacterial defense system toward oxidative stress. The chain is 33 kDa chaperonin from Photobacterium profundum (strain SS9).